A 288-amino-acid polypeptide reads, in one-letter code: HTH-type transcriptional regulator CzcR (288 aa).

The 58-residue stretch at 1–58 (MELRDLQIFQSVADQGSVSSAAKELNYVQSNVTARIKQLENELKTPLFYRHKRGMTLT) folds into the HTH lysR-type domain. Residues 18–37 (VSSAAKELNYVQSNVTARIK) constitute a DNA-binding region (H-T-H motif).

It belongs to the LysR transcriptional regulatory family.

This chain is HTH-type transcriptional regulator CzcR (czcR), found in Bacillus cereus (strain ATCC 10987 / NRS 248).